A 326-amino-acid polypeptide reads, in one-letter code: Ribose operon repressor (326 aa).

In terms of domain architecture, HTH lacI-type spans 1-56; sequence MATIKDVAGAAGVSVATVSRNLNDNGYVHEETRTRVIAAMAKLNYYPNEVARSLYK. Residues 4-23 constitute a DNA-binding region (H-T-H motif); the sequence is IKDVAGAAGVSVATVSRNLN.

Transcriptional repressor for the ribose rbsDACBK operon. This Bacillus subtilis (strain 168) protein is Ribose operon repressor (rbsR).